The chain runs to 621 residues: ATP-dependent lipid A-core flippase (621 aa).

5 helical membrane passes run 32–52 (IVAA…LAAF), 91–111 (VWGT…LVVI), 192–212 (IVLL…FPLL), 286–306 (SPFS…IALW), and 312–332 (YTTI…YAPI). The ABC transmembrane type-1 domain occupies 33–344 (VAALIAIFGV…LANISIPMQT (312 aa)). Residues 378 to 611 (FRNVDVEYRS…NGYYTMLRNI (234 aa)) form the ABC transporter domain. 410–417 (GRSGSGKS) lines the ATP pocket.

The protein belongs to the ABC transporter superfamily. Lipid exporter (TC 3.A.1.106) family. Homodimer.

The protein resides in the cell inner membrane. The enzyme catalyses ATP + H2O + lipid A-core oligosaccharideSide 1 = ADP + phosphate + lipid A-core oligosaccharideSide 2.. Its function is as follows. Involved in lipopolysaccharide (LPS) biosynthesis. Translocates lipid A-core from the inner to the outer leaflet of the inner membrane. Transmembrane domains (TMD) form a pore in the inner membrane and the ATP-binding domain (NBD) is responsible for energy generation. The sequence is that of ATP-dependent lipid A-core flippase from Neisseria meningitidis serogroup A / serotype 4A (strain DSM 15465 / Z2491).